Consider the following 825-residue polypeptide: Breast cancer anti-estrogen resistance protein 3 homolog (825 aa).

A2 carries the N-acetylalanine modification. A phosphoserine mark is found at S32, S78, S83, S182, and S290. Positions 40–84 (EAYPDVSIHGTLPRKKKGPPPIRSCDSASHMGTLPHSKSPRQSSP) are disordered. The 100-residue stretch at 154–253 (WYHGRIPRQV…QSGAIIFQPI (100 aa)) folds into the SH2 domain. The disordered stretch occupies residues 300–320 (DHSLPRGNLLRNKDKSGSQPA). Position 334 is an N6-methyllysine (K334). Residues S358, S363, and S375 each carry the phosphoserine modification. R442 bears the Omega-N-methylarginine mark. S471 is modified (phosphoserine). Residues 548–818 (DARVIAQHML…TALSRKLEPP (271 aa)) enclose the Ras-GEF domain. The segment at 744–748 (LATAR) is mediates the interaction with BCAR1/p130CAS.

As to quaternary structure, part of a complex comprised of PTPRA, BCAR1, BCAR3 and SRC; the formation of the complex is dependent on integrin mediated-tyrosine phosphorylation of PTPRA. Within the complex, interacts (via SH2 domain) with PTPRA (when phosphorylated on 'Tyr-792'). Interacts (via Ras-GEF domain) with BCAR1. Interacts (via Ras-GEF domain) with NEDD9. Interacts with PTK2/FAK1. Interacts with PTPN1. Interacts (via SH2 domain) with EGFR (when tyrosine-phosphorylated). Post-translationally, phosphorylated on tyrosine residues.

It localises to the cytoplasm. The protein resides in the cell junction. It is found in the focal adhesion. Acts as an adapter protein downstream of several growth factor receptors to promote cell proliferation, migration, and redistribution of actin fibers. Specifically involved in INS/insulin signaling pathway by mediating MAPK1/ERK2-MAPK3/ERK1 activation and DNA synthesis. Promotes insulin-mediated membrane ruffling. In response to vasoconstrictor peptide EDN1, involved in the activation of RAP1 downstream of PTK2B via interaction with phosphorylated BCAR1. Inhibits cell migration and invasion via regulation of TGFB-mediated matrix digestion, actin filament rearrangement, and inhibition of invadopodia activity. May inhibit TGFB/SMAD signaling, via facilitating BCAR1 and SMAD2 and/or SMAD3 interaction. Regulates EGF-induced DNA synthesis. Required for the maintenance of ocular lens morphology and structural integrity, potentially via regulation of focal adhesion complex signaling. Acts upstream of PTPRA to regulate the localization of BCAR1 and PTPRA to focal adhesions, via regulation of SRC-mediated phosphorylation of PTPRA. Positively regulates integrin-induced tyrosine phosphorylation of BCAR1. Acts as a guanine nucleotide exchange factor (GEF) for small GTPases RALA, RAP1A and RRAS. However, in a contrasting study, lacks GEF activity towards RAP1. This Rattus norvegicus (Rat) protein is Breast cancer anti-estrogen resistance protein 3 homolog.